Reading from the N-terminus, the 235-residue chain is Orotidine 5'-phosphate decarboxylase (235 aa).

Residues Asp-12, Lys-34, 61–70 (DLKFHDIPNT), Thr-121, Arg-182, Gln-191, Gly-211, and Arg-212 each bind substrate. Lys-63 functions as the Proton donor in the catalytic mechanism.

Belongs to the OMP decarboxylase family. Type 1 subfamily. Homodimer.

The catalysed reaction is orotidine 5'-phosphate + H(+) = UMP + CO2. It functions in the pathway pyrimidine metabolism; UMP biosynthesis via de novo pathway; UMP from orotate: step 2/2. In terms of biological role, catalyzes the decarboxylation of orotidine 5'-monophosphate (OMP) to uridine 5'-monophosphate (UMP). The protein is Orotidine 5'-phosphate decarboxylase of Marinomonas sp. (strain MWYL1).